The primary structure comprises 336 residues: Isethionate-binding periplasmic protein DctP (336 aa).

An N-terminal signal peptide occupies residues 1–23 (MKHLLKAGALVALACIVTLTAGA).

The protein belongs to the bacterial solute-binding protein 7 family. The complex comprises the periplasmic solute receptor protein DctP, and the fused transmembrane protein DctMQ.

It is found in the periplasm. The catalysed reaction is 2-hydroxyethane-1-sulfonate(out) + Na(+)(out) = 2-hydroxyethane-1-sulfonate(in) + Na(+)(in). It participates in organosulfur degradation; alkanesulfonate degradation. In terms of biological role, part of the tripartite ATP-independent periplasmic (TRAP) transport system DctPQM involved in the uptake of isethionate (2-hydroxyethanesulfonate), which is then catabolized by enzymes encoded by adjacent genes in the locus. The DctP subunit is the solute-binding protein. Thereby is involved in an anaerobic respiration pathway that converts the sulfonate isethionate to ammonia, acetate and sulfide. This Oleidesulfovibrio alaskensis (strain ATCC BAA-1058 / DSM 17464 / G20) (Desulfovibrio alaskensis) protein is Isethionate-binding periplasmic protein DctP.